Here is a 306-residue protein sequence, read N- to C-terminus: Ankyrin repeat domain-containing protein 23 (306 aa).

Positions 41-90 form a coiled coil; the sequence is QEAVAREKLKLEEEKRKKLERFNSSRLTLDNLTDLENLVQRRRKKRQRHK. Positions 78–107 are disordered; it reads LVQRRRKKRQRHKVPPREPESGAEPQPQVP. Residues 80-91 show a composition bias toward basic residues; it reads QRRRKKRQRHKV. 4 ANK repeats span residues 144 to 173, 177 to 206, 210 to 239, and 243 to 272; these read LHRT…AIEV, LDRT…QVNA, IWST…HINA, and EGDT…KLGV. The tract at residues 179 to 196 is interaction with TTN; it reads RTPVFWACRGGHLDILKR.

As to quaternary structure, interacts with titin/TTN and MYPN.

The protein resides in the nucleus. Its function is as follows. May be involved in the energy metabolism. Could be a molecular link between myofibrillar stretch-induced signaling pathways and muscle gene expression. The sequence is that of Ankyrin repeat domain-containing protein 23 (Ankrd23) from Mus musculus (Mouse).